The chain runs to 795 residues: Protocadherin beta-5 (795 aa).

Positions 1-30 are cleaved as a signal peptide; it reads METALAKTPQKRQVMFLAILLLLWEAGSEA. At 31 to 689 the chain is on the extracellular side; sequence VRYSIPEETE…AQADSLTVYL (659 aa). 5 consecutive Cadherin domains span residues 35 to 133, 138 to 242, 247 to 346, 351 to 450, and 455 to 560; these read IPEE…SPEF, MLLK…APEF, YEVQ…APEL, LSSP…APAF, and YTLF…SPFV. N-linked (GlcNAc...) asparagine glycosylation occurs at Asn-169. An N6-acetyllysine modification is found at Lys-296. Asn-417 and Asn-435 each carry an N-linked (GlcNAc...) asparagine glycan. N-linked (GlcNAc...) asparagine glycosylation is present at Asn-566. Residues 567-670 enclose the Cadherin 6 domain; sequence GSAPCTELVP…LVDGFSQPYL (104 aa). The helical transmembrane segment at 690-710 threads the bilayer; the sequence is VVALASVSSLFLFSVLLFVAV. At 711 to 795 the chain is on the cytoplasmic side; it reads RLCRRSRAAP…AAFRNSFGLN (85 aa).

It localises to the cell membrane. Functionally, potential calcium-dependent cell-adhesion protein. May be involved in the establishment and maintenance of specific neuronal connections in the brain. The chain is Protocadherin beta-5 (PCDHB5) from Pan troglodytes (Chimpanzee).